The primary structure comprises 78 residues: Acyl carrier protein AcpP (78 aa).

Positions 2 to 77 (SDIAERVKKI…DAVKFIEKAQ (76 aa)) constitute a Carrier domain. Ser-37 is modified (O-(pantetheine 4'-phosphoryl)serine).

The protein belongs to the acyl carrier protein (ACP) family. Post-translationally, 4'-phosphopantetheine is transferred from CoA to a specific serine of apo-ACP by AcpS. This modification is essential for activity because fatty acids are bound in thioester linkage to the sulfhydryl of the prosthetic group.

Its subcellular location is the cytoplasm. It participates in lipid metabolism; fatty acid biosynthesis. In terms of biological role, carrier of the growing fatty acid chain in fatty acid biosynthesis. This chain is Acyl carrier protein AcpP, found in Agrobacterium fabrum (strain C58 / ATCC 33970) (Agrobacterium tumefaciens (strain C58)).